Consider the following 88-residue polypeptide: Small ribosomal subunit protein bS20 (88 aa).

The interval 1-20 (MPNIKSAIKRTKTNNERRAH) is disordered.

This sequence belongs to the bacterial ribosomal protein bS20 family.

In terms of biological role, binds directly to 16S ribosomal RNA. The sequence is that of Small ribosomal subunit protein bS20 from Bacillus velezensis (strain DSM 23117 / BGSC 10A6 / LMG 26770 / FZB42) (Bacillus amyloliquefaciens subsp. plantarum).